Here is a 430-residue protein sequence, read N- to C-terminus: NEDD8-activating enzyme E1 catalytic subunit (430 aa).

52–76 (GLGCELLKNLALSGFRTIEVIDMDT) is a binding site for ATP. Cysteine 211 serves as the catalytic Glycyl thioester intermediate.

The protein belongs to the ubiquitin-activating E1 family. UBA3 subfamily. As to quaternary structure, heterodimer of uba-3 and ula-1. Interacts with NEDD8 and ubc-12. Expressed in intestine, vulva epithelium and head and tail neurons.

The protein localises to the nucleus. It is found in the cytoplasm. It catalyses the reaction ATP + [NEDD8 protein] + [E1 NEDD8-activating enzyme]-L-cysteine = AMP + diphosphate + [E1 NEDD8-activating enzyme]-S-[NEDD8 protein]-yl-L-cysteine.. Its pathway is protein modification; protein neddylation. Functionally, catalytic subunit of the dimeric rfl-1 (uba-3)-ula-1 E1 enzyme. E1 activates NEDD8 by first adenylating its C-terminal glycine residue with ATP, thereafter linking this residue to the side chain of the catalytic cysteine, yielding a NEDD8-uba-3 thioester and free AMP. E1 finally transfers NEDD8 to the catalytic cysteine of ubc-12. Required for cytokinesis and mitotic spindle orientation during early embryogenesis. The chain is NEDD8-activating enzyme E1 catalytic subunit from Caenorhabditis elegans.